The primary structure comprises 334 residues: ATP-dependent kinase YFH7 (334 aa).

Gly-30–Thr-38 contacts ATP.

This sequence belongs to the YFH7 family.

Its function is as follows. ATP-dependent kinase that could be involved in endoplasmic reticulum membrane assembly. The sequence is that of ATP-dependent kinase YFH7 (YFH7) from Eremothecium gossypii (strain ATCC 10895 / CBS 109.51 / FGSC 9923 / NRRL Y-1056) (Yeast).